The chain runs to 257 residues: Protein vip1 (257 aa).

One can recognise an RRM domain in the interval 3–76; sequence NQVIVTNISP…NKIQITSEDG (74 aa). A disordered region spans residues 74-99; it reads EDGGAASTTDQGGAGGDQAARQEDKP. The segment covering 75-84 has biased composition (low complexity); that stretch reads DGGAASTTDQ. 2 positions are modified to phosphoserine: serine 132 and serine 177. The disordered stretch occupies residues 217 to 257; that stretch reads ARRLADAKNQAEGTASPASSTPTAPAEKEPTAPTTESKTTE. A Phosphothreonine modification is found at threonine 230. Over residues 230-257 the composition is skewed to low complexity; it reads TASPASSTPTAPAEKEPTAPTTESKTTE. Residues serine 232 and serine 235 each carry the phosphoserine modification.

This is Protein vip1 (vip1) from Schizosaccharomyces pombe (strain 972 / ATCC 24843) (Fission yeast).